Reading from the N-terminus, the 218-residue chain is Capsid protein (218 aa).

M1 is subject to N-acetylmethionine; by host. Low complexity predominate over residues 1 to 10 (MDKSESTSAG). The tract at residues 1–30 (MDKSESTSAGRNRRRRLRRGSRSASSSSDA) is disordered. Over residues 11-21 (RNRRRRLRRGS) the composition is skewed to basic residues.

Belongs to the cucumovirus capsid protein family.

It is found in the virion. In terms of biological role, capsid protein. Probably binds RNA and plays a role in packaging. The sequence is that of Capsid protein from Cucumber mosaic virus (strain Y) (CMV).